A 409-amino-acid chain; its full sequence is MSTVREEQLNLEIPASDVGSRWQKLINWFQPKASQPLYDRMLFTLAMALLAFGFVMVTSASLPTADRLTGNPFHFAIRHGIYILISLAVMLATLRVPANSWNQQSGKLLLLGLIMLLMVLVVGYEVNGAQRWIKVGPITFQAAEVAKLFFCIYMASYLSRREDEVREATKGFIKPLALLFIAAVLLLMQPDFGTVVVLSATTVAMLFLAGARLWQFFAVFITCVLALILLIIVEPYRMQRLLTFLEPEKDPFGAGYQLMQSLIAFGQGHFSGAGLGNSIQKLQYLPEAHTDFIMAVVAEELGFLGVLAVIATVLMLVWRALIIGRRCLMQEQRYGGYLAYGIGIWFSIQAFVNIGVASGALPTKGLTLPLVSYGGNSLIISALAVGLLLRIDHERRMLGRKVAPRGGAE.

A run of 9 helical transmembrane segments spans residues 42 to 62, 72 to 92, 108 to 128, 135 to 155, 178 to 198, 213 to 233, 303 to 323, 337 to 357, and 368 to 388; these read LFTL…SASL, PFHF…VMLA, LLLL…EVNG, VGPI…IYMA, LLFI…VVVL, LWQF…LIIV, FLGV…ALII, YLAY…IGVA, and LPLV…VGLL.

The protein belongs to the SEDS family. FtsW subfamily.

It is found in the cell inner membrane. The catalysed reaction is [GlcNAc-(1-&gt;4)-Mur2Ac(oyl-L-Ala-gamma-D-Glu-L-Lys-D-Ala-D-Ala)](n)-di-trans,octa-cis-undecaprenyl diphosphate + beta-D-GlcNAc-(1-&gt;4)-Mur2Ac(oyl-L-Ala-gamma-D-Glu-L-Lys-D-Ala-D-Ala)-di-trans,octa-cis-undecaprenyl diphosphate = [GlcNAc-(1-&gt;4)-Mur2Ac(oyl-L-Ala-gamma-D-Glu-L-Lys-D-Ala-D-Ala)](n+1)-di-trans,octa-cis-undecaprenyl diphosphate + di-trans,octa-cis-undecaprenyl diphosphate + H(+). It participates in cell wall biogenesis; peptidoglycan biosynthesis. Its function is as follows. Peptidoglycan polymerase that is essential for cell division. The protein is Probable peptidoglycan glycosyltransferase FtsW of Idiomarina loihiensis (strain ATCC BAA-735 / DSM 15497 / L2-TR).